The following is a 33-amino-acid chain: Photosystem II reaction center protein Psb30 (33 aa).

The helical transmembrane segment at 5–25 threads the bilayer; sequence LIAQLTFLTSIIVSGPLVIAL.

This sequence belongs to the Psb30/Ycf12 family. PSII is composed of 1 copy each of membrane proteins PsbA, PsbB, PsbC, PsbD, PsbE, PsbF, PsbH, PsbI, PsbJ, PsbK, PsbL, PsbM, PsbT, PsbX, PsbY, PsbZ, Psb30/Ycf12, peripheral proteins of the oxygen-evolving complex and a large number of cofactors. It forms dimeric complexes.

Its subcellular location is the plastid. The protein resides in the chloroplast thylakoid membrane. Its function is as follows. A core subunit of photosystem II (PSII), probably helps stabilize the reaction center. This chain is Photosystem II reaction center protein Psb30, found in Psilotum nudum (Whisk fern).